The chain runs to 361 residues: Mitochondrial import receptor subunit TOM40 homolog (361 aa).

The segment covering 1–10 has biased composition (low complexity); that stretch reads MGNVLAASSP. Positions 1–71 are disordered; sequence MGNVLAASSP…TASASGAAED (71 aa). Over residues 11-36 the composition is skewed to pro residues; it reads PAGPPPPPAPALVGLPPPPPSPPGFT. Low complexity-rich tracts occupy residues 37–52 and 59–71; these read LPPL…STSR and GAAT…AAED.

It belongs to the Tom40 family. As to quaternary structure, forms part of the preprotein translocase complex of the outer mitochondrial membrane (TOM complex) which consists of at least 7 different proteins (TOMM5, TOMM6, TOMM7, TOMM20, TOMM22, TOMM40 and TOMM70). Interacts with mitochondrial targeting sequences. Interacts with TIMM29; linking the TIM22 complex to the TOM complex. Forms a complex with BCAP31 (via C-terminus) which mediates the translocation of components of the mitochondrial membrane respiratory chain NADH dehydrogenase (Complex I) from the cytosol to the mitochondria. Interacts (via N-terminus) with CYP1A1 (via mitochondrial targeting signal); this interaction is required for CYP1A1 translocation across the mitochondrial outer membrane.

It localises to the mitochondrion outer membrane. Channel-forming protein essential for import of protein precursors into mitochondria. Plays a role in the assembly of the mitochondrial membrane respiratory chain NADH dehydrogenase (Complex I) by forming a complex with BCAP31 and mediating the translocation of Complex I components from the cytosol to the mitochondria. The protein is Mitochondrial import receptor subunit TOM40 homolog (TOMM40) of Homo sapiens (Human).